The chain runs to 512 residues: MATVGSLKPLHHSSCSSSFPRNPIVNRKALLGFVFDSARKNQIRCENLRYSSESDGKRRNAAAKKRNQSPERCAAEGVLTGGGGSEAIAEVRTMMPERIKVVILTACMMCLCNADRVVMSVAVVPLADKLGWSSSFLGVVQSSFLWGYIFSSVIGGALVDRYGGKRVLAWGVALWSLATLLTPWAAAHSTLALLCVRAFFGLAEGVAMPSMTTLLSRWFPMDERASAVGISMAGFHMGNVVGLLLTPLMLSSIGISGPFILFASLGLLWVSTWSSGVTNNPQDSPFITRSELRLIQAGKPVQPSTISPKPNPSLRLLLSKLPTWAIIFANVTNNWGYFVLLSWMPVYFQTVFNVNLKQAAWFSALPWATMAISGYYAGAASDFLIRTGHSVTSVRKIMQSIGFMGPGLSLLCLNFAKSPSCAAVFMTIALSLSSFSQAGFLLNMQDIAPQYAGFLHGISNCAGTLAAIVSTIGTGYFVQWLGSFQAFLTVTAFLYFATTVFWLLFATGERVF.

The transit peptide at 1–44 directs the protein to the chloroplast; that stretch reads MATVGSLKPLHHSSCSSSFPRNPIVNRKALLGFVFDSARKNQIR. The next 12 helical transmembrane spans lie at 102–124, 139–159, 167–187, 191–211, 228–248, 250–270, 324–344, 359–379, 396–416, 422–442, 462–482, and 486–506; these read VILTACMMCLCNADRVVMSVAVV, VVQSSFLWGYIFSSVIGGALV, VLAWGVALWSLATLLTPWAAA, LALLCVRAFFGLAEGVAMPSM, VGISMAGFHMGNVVGLLLTPL, LSSIGISGPFILFASLGLLWV, WAIIFANVTNNWGYFVLLSWM, AAWFSALPWATMAISGYYAGA, KIMQSIGFMGPGLSLLCLNFA, AAVFMTIALSLSSFSQAGFLL, AGTLAAIVSTIGTGYFVQWLG, and AFLTVTAFLYFATTVFWLLFA.

This sequence belongs to the major facilitator superfamily. Sodium/anion cotransporter (TC 2.A.1.14) family. In terms of tissue distribution, expressed in roots.

It localises to the plastid. The protein resides in the chloroplast membrane. Inorganic phosphate and probable anion transporter. The polypeptide is Probable anion transporter 3, chloroplastic (ANTR3) (Arabidopsis thaliana (Mouse-ear cress)).